A 900-amino-acid chain; its full sequence is Periodic tryptophan protein 2 (900 aa).

WD repeat units follow at residues 10–47, 50–89, 91–129, 139–178, and 185–229; these read GAPY…SVTL, ETST…VLHR, TFKD…RAVL, NSDD…GVLN, and GHRD…VKMD. Residues 228-284 are disordered; sequence MDESEDGHSEPPSPVTPDRADEVMVENGGGVGTELKKRKEYDGKGLESDEEGDDDDE. The span at 261–274 shows a compositional bias: basic and acidic residues; sequence ELKKRKEYDGKGLE. Position 275 is a phosphoserine (S275). Positions 275-284 are enriched in acidic residues; that stretch reads SDEEGDDDDE. WD repeat units lie at residues 302 to 341, 344 to 384, 387 to 426, 429 to 468, 472 to 512, 515 to 554, 557 to 596, and 619 to 658; these read QASA…CIHL, ISRQ…YILK, GHYF…CFIT, EHTN…NYKT, PTPR…IKDI, GHEA…GTVE, RHNH…LMYT, and SSGK…LLRR. Residues 684-720 form a disordered region; that stretch reads PIDLIDDDNSDEEGGIDKQSRGNLGYDLPGSRPNRGR. The segment covering 687 to 697 has biased composition (acidic residues); that stretch reads LIDDDNSDEEG. The stretch at 720-759 is one WD 14 repeat; it reads RPIIRTKSLSIAPTGRSFAAATTEGVLIFSIDDTFIFDPT.

This sequence belongs to the WD repeat PWP2 family. In terms of assembly, component of the ribosomal small subunit (SSU) processome. Interacts with TBP1 in the nucleus. In terms of tissue distribution, expressed constitutively and ubiquitously; observed in seeds, seedlings, roots, leaves, stems, flowers and siliques.

Its subcellular location is the nucleus. It is found in the nucleolus. In terms of biological role, involved in nucleolar processing of pre-18S ribosomal RNA. Plays a role early in ribosome biogenesis, especially in the maturation of 5.8S rRNA. Required for guard cell functions. This chain is Periodic tryptophan protein 2, found in Arabidopsis thaliana (Mouse-ear cress).